Consider the following 37-residue polypeptide: Large ribosomal subunit protein bL36 (37 aa).

This sequence belongs to the bacterial ribosomal protein bL36 family.

The polypeptide is Large ribosomal subunit protein bL36 (Trichodesmium erythraeum (strain IMS101)).